The chain runs to 548 residues: Probable delta-1-pyrroline-5-carboxylate dehydrogenase (548 aa).

The active-site Proton acceptor is the Glu298. Cys332 (nucleophile) is an active-site residue. Ser391, Ser394, and Ser396 each carry phosphoserine.

It belongs to the aldehyde dehydrogenase family.

It catalyses the reaction L-glutamate 5-semialdehyde + NAD(+) + H2O = L-glutamate + NADH + 2 H(+). Its pathway is amino-acid degradation; L-proline degradation into L-glutamate; L-glutamate from L-proline: step 2/2. In Schizosaccharomyces pombe (strain 972 / ATCC 24843) (Fission yeast), this protein is Probable delta-1-pyrroline-5-carboxylate dehydrogenase.